Here is a 399-residue protein sequence, read N- to C-terminus: Small ribosomal subunit protein uS3m (399 aa).

The protein belongs to the universal ribosomal protein uS3 family.

It localises to the mitochondrion. Essential for mitochondrial protein synthesis and required for the maturation of small ribosomal subunits. This is Small ribosomal subunit protein uS3m from Penicillium urticae.